Here is a 190-residue protein sequence, read N- to C-terminus: Coat protein (190 aa).

The protein belongs to the potexvirus capsid protein family.

The protein localises to the virion. Its function is as follows. Required for genome encapsidation. Forms ribonucleoprotein complexes along with TGB1 helicase and viral RNA. The protein is Coat protein of White clover mosaic virus (strain M) (WCMV).